Here is a 206-residue protein sequence, read N- to C-terminus: Glycerol-3-phosphate acyltransferase (206 aa).

A run of 5 helical transmembrane segments spans residues 14–34 (IALA…GLIL), 67–87 (ATLL…GYFL), 91–111 (AAII…WIGF), 124–144 (LLGV…AVAV), and 148–168 (YSSL…LILG).

This sequence belongs to the PlsY family. Probably interacts with PlsX.

It localises to the cell inner membrane. The catalysed reaction is an acyl phosphate + sn-glycerol 3-phosphate = a 1-acyl-sn-glycero-3-phosphate + phosphate. The protein operates within lipid metabolism; phospholipid metabolism. Catalyzes the transfer of an acyl group from acyl-phosphate (acyl-PO(4)) to glycerol-3-phosphate (G3P) to form lysophosphatidic acid (LPA). This enzyme utilizes acyl-phosphate as fatty acyl donor, but not acyl-CoA or acyl-ACP. This is Glycerol-3-phosphate acyltransferase from Rhizobium etli (strain ATCC 51251 / DSM 11541 / JCM 21823 / NBRC 15573 / CFN 42).